A 141-amino-acid polypeptide reads, in one-letter code: Putative nickel-responsive regulator (141 aa).

Residues H80, H91, H93, and C99 each coordinate Ni(2+).

The protein belongs to the transcriptional regulatory CopG/NikR family. Ni(2+) serves as cofactor.

Transcriptional regulator. In Methanococcus vannielii (strain ATCC 35089 / DSM 1224 / JCM 13029 / OCM 148 / SB), this protein is Putative nickel-responsive regulator.